Here is a 403-residue protein sequence, read N- to C-terminus: Phosphoglycerate kinase (403 aa).

Residues 24-26 (DLN), R39, 62-65 (HLGR), R121, and R161 each bind substrate. Residues K211, G299, E330, and 359 to 362 (GGDS) each bind ATP.

Belongs to the phosphoglycerate kinase family. As to quaternary structure, monomer.

It is found in the cytoplasm. It catalyses the reaction (2R)-3-phosphoglycerate + ATP = (2R)-3-phospho-glyceroyl phosphate + ADP. It participates in carbohydrate degradation; glycolysis; pyruvate from D-glyceraldehyde 3-phosphate: step 2/5. This chain is Phosphoglycerate kinase, found in Rhodococcus opacus (strain B4).